Here is a 117-residue protein sequence, read N- to C-terminus: Ribonuclease P protein component (117 aa).

The protein belongs to the RnpA family. As to quaternary structure, consists of a catalytic RNA component (M1 or rnpB) and a protein subunit.

It carries out the reaction Endonucleolytic cleavage of RNA, removing 5'-extranucleotides from tRNA precursor.. RNaseP catalyzes the removal of the 5'-leader sequence from pre-tRNA to produce the mature 5'-terminus. It can also cleave other RNA substrates such as 4.5S RNA. The protein component plays an auxiliary but essential role in vivo by binding to the 5'-leader sequence and broadening the substrate specificity of the ribozyme. This chain is Ribonuclease P protein component, found in Desulforapulum autotrophicum (strain ATCC 43914 / DSM 3382 / VKM B-1955 / HRM2) (Desulfobacterium autotrophicum).